A 707-amino-acid chain; its full sequence is uncharacterized protein (707 aa).

Disordered regions lie at residues 15–122 and 667–707; these read ALAK…LESY and ESVQ…DIDE. Composition is skewed to basic and acidic residues over residues 18–32 and 40–52; these read KKND…DKGI and EGKD…DVEK. Ser-112 carries the phosphoserine modification. Residues 659–700 adopt a coiled-coil conformation; sequence EEQRKLIRESVQQDQEHKEQMRQKKKQALKSDDIELDDLSEE. Residues 692-707 show a composition bias toward acidic residues; sequence IELDDLSEEEAEDIDE.

The protein belongs to the NOC2 family.

It is found in the nucleus. It localises to the nucleolus. This is an uncharacterized protein from Schizosaccharomyces pombe (strain 972 / ATCC 24843) (Fission yeast).